Here is an 879-residue protein sequence, read N- to C-terminus: Alanine--tRNA ligase (879 aa).

Zn(2+) contacts are provided by histidine 566, histidine 570, cysteine 668, and histidine 672.

It belongs to the class-II aminoacyl-tRNA synthetase family. The cofactor is Zn(2+).

Its subcellular location is the cytoplasm. The enzyme catalyses tRNA(Ala) + L-alanine + ATP = L-alanyl-tRNA(Ala) + AMP + diphosphate. In terms of biological role, catalyzes the attachment of alanine to tRNA(Ala) in a two-step reaction: alanine is first activated by ATP to form Ala-AMP and then transferred to the acceptor end of tRNA(Ala). Also edits incorrectly charged Ser-tRNA(Ala) and Gly-tRNA(Ala) via its editing domain. This Listeria innocua serovar 6a (strain ATCC BAA-680 / CLIP 11262) protein is Alanine--tRNA ligase.